We begin with the raw amino-acid sequence, 2419 residues long: Telomere-associated protein RIF1 (2419 aa).

Disordered regions lie at residues 1 to 24 and 373 to 408; these read MTAP…VPPG and SIPS…SPRG. The span at 373–385 shows a compositional bias: polar residues; that stretch reads SIPSPQGNSSRGS. Serine 385, serine 391, serine 779, serine 976, and serine 1005 each carry phosphoserine. Threonine 1044 bears the Phosphothreonine mark. A compositionally biased stretch (low complexity) spans 1184–1198; that stretch reads SSSTETSVVSSSSVS. Disordered regions lie at residues 1184–1594 and 1613–1637; these read SSST…QAVP and RVIL…EKSK. 2 stretches are compositionally biased toward polar residues: residues 1199 to 1217 and 1228 to 1255; these read NATF…QTFI and RPFS…TNTD. Threonine 1215 bears the Phosphothreonine mark. Phosphoserine occurs at positions 1231 and 1233. A compositionally biased stretch (basic and acidic residues) spans 1263–1272; that stretch reads REVTNSKSDS. Residues 1289–1302 are compositionally biased toward polar residues; it reads AEQSVTKKSKPSLT. Basic and acidic residues predominate over residues 1323-1345; the sequence is HVSENDDHPSEATLEHKDGDPKP. Residues serine 1407, serine 1439, serine 1457, and serine 1498 each carry the phosphoserine modification. The span at 1416-1455 shows a compositional bias: basic and acidic residues; that stretch reads SQERESGQQKKERRKEEEKIISKSPLRIKDDKLPTQKLTD. Residues 1457–1467 are compositionally biased toward polar residues; the sequence is SPIQENLTEKG. A Phosphothreonine modification is found at threonine 1504. Residues 1507–1516 are compositionally biased toward basic and acidic residues; that stretch reads NLDKSSEKPL. Positions 1525 to 1537 are enriched in polar residues; it reads RRASQGLISAVEN. A phosphoserine mark is found at serine 1528, serine 1538, serine 1540, serine 1542, and serine 1550. The segment covering 1551 to 1560 has biased composition (basic residues); sequence RKKRSGKWKN. Serine 1562 and serine 1565 each carry phosphoserine. Basic and acidic residues predominate over residues 1572–1581; it reads EEKKAEEEVM. 2 positions are modified to phosphoserine: serine 1680 and serine 1683. Threonine 1780 carries the post-translational modification Phosphothreonine. A Phosphoserine modification is found at serine 1784. Residues 1812-1836 are disordered; that stretch reads ASEAVSEIQGPCSENHSPAEDPGLS. Serine 1842 is modified (phosphoserine). The segment at 1882-2419 is interaction with condensed chromosomes in telophase; the sequence is DAFVAADSEK…RWRSPAHENS (538 aa). 2 disordered regions span residues 1890–1914 and 1929–1983; these read EKST…ECEA and FNSG…AQMS. Phosphoserine is present on residues serine 1931, serine 2094, serine 2109, serine 2121, serine 2125, serine 2144, serine 2153, serine 2208, serine 2287, serine 2341, serine 2413, and serine 2419. Residues 2119–2394 form an interaction with ERCC6 region; that stretch reads VWSPLASPST…TGSQLFEMHE (276 aa). Residues 2182 to 2212 form a disordered region; it reads SPIIKSVKTSPTSHSKHNTTSAKGFLSPGSQ. Polar residues predominate over residues 2189–2212; that stretch reads KTSPTSHSKHNTTSAKGFLSPGSQ.

This sequence belongs to the RIF1 family. In terms of assembly, interacts with TP53BP1 (when phosphorylated by ATM). May interact with TRF2. Interacts with SHLD2. Interacts with ERCC6 (via WHD region). Interacts with ASTE1. In terms of tissue distribution, expressed in Sertoli cells, prospermatagonia, early primary spermatocytes, and in oocytes at all stages of their growth. Expressed in embryonic stem (ES) and embryonic germ (EG) cells: expression is lost upon differentiation.

It localises to the nucleus. It is found in the chromosome. The protein localises to the telomere. Its subcellular location is the cytoplasm. The protein resides in the cytoskeleton. It localises to the spindle. Its function is as follows. Key regulator of TP53BP1 that plays a key role in the repair of double-strand DNA breaks (DSBs) in response to DNA damage: acts by promoting non-homologous end joining (NHEJ)-mediated repair of DSBs. In response to DNA damage, interacts with ATM-phosphorylated TP53BP1. Interaction with TP53BP1 leads to dissociate the interaction between NUDT16L1/TIRR and TP53BP1, thereby unmasking the tandem Tudor-like domain of TP53BP1 and allowing recruitment to DNA DSBs. Once recruited to DSBs, RIF1 and TP53BP1 act by promoting NHEJ-mediated repair of DSBs. In the same time, RIF1 and TP53BP1 specifically counteract the function of BRCA1 by blocking DSBs resection via homologous recombination (HR) during G1 phase. Also required for immunoglobulin class-switch recombination (CSR) during antibody genesis, a process that involves the generation of DNA DSBs. Promotes NHEJ of dysfunctional telomeres. The polypeptide is Telomere-associated protein RIF1 (Mus musculus (Mouse)).